A 53-amino-acid chain; its full sequence is MLYYVGADLDSTYKFACFIMKQVKFNDLVKNIKVQINASNIVSFSSKRLVSFA.

It localises to the plastid. The protein localises to the chloroplast. This is an uncharacterized protein from Guillardia theta (Cryptophyte).